The sequence spans 708 residues: MEANHQRNDLGLVALTMLAQYHNISLNPEEIKHKFDLDGKGLSLTSWLLAAKSLALKAKHIKKEISRLHLVNLPALVWQDNGKHFLLVKVDTDNNRYLTYNLEQDAPQILSQDEFEACYQGQLILVTSRASVVGQLAKFDFTWFIPAVIKYRKIFLETLIVSIFLQIFALITPLFFQVVMDKVLVHRGFSTLNIITVALAIVIIFEIVLSGLRTYVFSHSTSRIDVELGAKLFRHLLSLPISYFENRRVGDTVARVRELDQIRNFLTGQALTSVLDLLFSFIFFAVMWYYSPKLTLVILGSLPCYILWSIFISPILRRRLDEKFARSADNQAFLVESVTAINMIKAMAVAPQMTDTWDKQLASYVSSSFRVTVLATIGQQGVQLIQKTVMVINLWLGAHLVISGDLSIGQLIAFNMLSGQVIAPVIRLAQLWQDFQQVGISVTRLGDVLNSPTEQYQGKLSLPEIKGDISFKNIRFRYKPDAPTILNNVNLEIRQGEVIGIVGRSGSGKSTLTKLLQRFYIPENGQVLIDGHDLALADPNWLRRQIGVVLQDNVLLNRSIRENIALSDPGMPMERVIYAAKLAGAHDFISELREGYNTIVGEQGAGLSGGQRQRIAIARALVNNPKILIFDEATSALDYESEHIIMQNMQKICQGRTVILIAHRLSTVKNADRIIVMEKGEIVEQGKHHELLQNSNGLYSYLHQLQLN.

A Peptidase C39 domain is found at 1–126 (MEANHQRNDL…ACYQGQLILV (126 aa)). Residues 155 to 437 (FLETLIVSIF…LAQLWQDFQQ (283 aa)) form the ABC transmembrane type-1 domain. The next 5 helical transmembrane spans lie at 159–179 (LIVS…FQVV), 192–212 (LNII…LSGL), 270–290 (ALTS…MWYY), 296–316 (LVIL…SPIL), and 389–409 (VMVI…LSIG). An ABC transporter domain is found at 469–704 (ISFKNIRFRY…SNGLYSYLHQ (236 aa)). Residue 503 to 510 (GRSGSGKS) participates in ATP binding.

The protein belongs to the ABC transporter superfamily. Protein-1 exporter (TC 3.A.1.109) family. In terms of assembly, homodimer.

The protein resides in the cell inner membrane. The catalysed reaction is ATP + H2O + proteinSide 1 = ADP + phosphate + proteinSide 2.. In terms of biological role, part of the ABC transporter complex LktBD involved in leukotoxin export. Transmembrane domains (TMD) form a pore in the inner membrane and the ATP-binding domain (NBD) is responsible for energy generation. The protein is Leukotoxin translocation ATP-binding protein LktB (lktB) of Mannheimia haemolytica (Pasteurella haemolytica).